Consider the following 445-residue polypeptide: Arginine biosynthesis bifunctional protein ArgJ, mitochondrial (445 aa).

6 residues coordinate substrate: T189, K215, T226, E312, N440, and S445. The active-site Nucleophile is T226.

It belongs to the ArgJ family. As to quaternary structure, heterodimer of an alpha and a beta chain. In terms of processing, the alpha and beta chains are autoproteolytically processed from a single precursor protein within the mitochondrion.

The protein resides in the mitochondrion matrix. It catalyses the reaction N(2)-acetyl-L-ornithine + L-glutamate = N-acetyl-L-glutamate + L-ornithine. The enzyme catalyses L-glutamate + acetyl-CoA = N-acetyl-L-glutamate + CoA + H(+). It participates in amino-acid biosynthesis; L-arginine biosynthesis; L-ornithine and N-acetyl-L-glutamate from L-glutamate and N(2)-acetyl-L-ornithine (cyclic): step 1/1. Its pathway is amino-acid biosynthesis; L-arginine biosynthesis; N(2)-acetyl-L-ornithine from L-glutamate: step 1/4. Its function is as follows. Catalyzes two activities which are involved in the cyclic version of arginine biosynthesis: the synthesis of acetylglutamate from glutamate and acetyl-CoA, and of ornithine by transacetylation between acetylornithine and glutamate. This chain is Arginine biosynthesis bifunctional protein ArgJ, mitochondrial, found in Schizosaccharomyces pombe (strain 972 / ATCC 24843) (Fission yeast).